A 150-amino-acid polypeptide reads, in one-letter code: Peptide deformylase (150 aa).

Fe cation is bound by residues cysteine 88 and histidine 130. Residue glutamate 131 is part of the active site. Residue histidine 134 coordinates Fe cation.

Belongs to the polypeptide deformylase family. Fe(2+) is required as a cofactor.

It catalyses the reaction N-terminal N-formyl-L-methionyl-[peptide] + H2O = N-terminal L-methionyl-[peptide] + formate. Functionally, removes the formyl group from the N-terminal Met of newly synthesized proteins. Requires at least a dipeptide for an efficient rate of reaction. N-terminal L-methionine is a prerequisite for activity but the enzyme has broad specificity at other positions. This is Peptide deformylase from Desulfitobacterium hafniense (strain DSM 10664 / DCB-2).